Consider the following 975-residue polypeptide: Monofunctional C1-tetrahydrofolate synthase, mitochondrial (975 aa).

The N-terminal 30 residues, Met-1 to Ala-30, are a transit peptide targeting the mitochondrion. The interval Ala-13–Leu-45 is disordered. The segment at Ser-31–Leu-345 is methylenetetrahydrofolate dehydrogenase and cyclohydrolase. The span at Arg-34–Leu-44 shows a compositional bias: gly residues. The residue at position 187 (Lys-187) is an N6-acetyllysine; alternate. N6-succinyllysine; alternate is present on Lys-187. The formyltetrahydrofolate synthetase stretch occupies residues His-346–Phe-975. Residue Ser-354 is modified to Phosphoserine. Residue Thr-420–Ser-427 participates in ATP binding. N6-succinyllysine is present on Lys-593.

In the N-terminal section; belongs to the tetrahydrofolate dehydrogenase/cyclohydrolase family. The protein in the C-terminal section; belongs to the formate--tetrahydrofolate ligase family. As to quaternary structure, homodimer.

It localises to the mitochondrion. It catalyses the reaction (6S)-5,6,7,8-tetrahydrofolate + formate + ATP = (6R)-10-formyltetrahydrofolate + ADP + phosphate. Its pathway is one-carbon metabolism; tetrahydrofolate interconversion. May provide the missing metabolic reaction required to link the mitochondria and the cytoplasm in the mammalian model of one-carbon folate metabolism complementing thus the enzymatic activities of MTHFD2. In Bos taurus (Bovine), this protein is Monofunctional C1-tetrahydrofolate synthase, mitochondrial (MTHFD1L).